Reading from the N-terminus, the 351-residue chain is Caveolin-2 (351 aa).

Residues 1–14 (MTRQNTSESDNTQR) show a composition bias toward polar residues. Disordered stretches follow at residues 1–55 (MTRQ…QGIA), 71–93 (HRTS…YDNL), and 144–193 (QKGS…PEME). The Cytoplasmic segment spans residues 1–261 (MTRQNTSESD…FEIVRIYSYK (261 aa)). A compositionally biased stretch (acidic residues) spans 22-31 (TVDDIDELTD). The segment covering 38–51 (HHHHHHHHEHHHQH) has biased composition (basic residues). Positions 167-184 (PAQQSAPPTQQSRPQTTS) are enriched in low complexity. Positions 262–290 (ILTLIFGLIIAFLGGILFALFAFLNIWIF) form an intramembrane region, helical. Residues 291–351 (RPILILTRMA…EVWEKHIHHV (61 aa)) are Cytoplasmic-facing.

Belongs to the caveolin family. Homooligomer. Expressed in intracellular bodies in intestinal cells.

It is found in the golgi apparatus membrane. The protein resides in the cell membrane. It localises to the membrane. The protein localises to the caveola. Its subcellular location is the apical cell membrane. Functionally, may act as a scaffolding protein within caveolar membranes. Interacts directly with G-protein alpha subunits and can regulate their activity. Thought to have a role in the uptake of lipids and proteins in the intestinal cells; operates in the apical uptake of lipid markers and trafficking of yolk proteins. Affects fecundity and egg laying. The protein is Caveolin-2 (cav-2) of Caenorhabditis elegans.